Consider the following 253-residue polypeptide: 3-dehydroquinate dehydratase (253 aa).

Residues 46-48 (EWR) and Arg82 contribute to the 3-dehydroquinate site. His143 serves as the catalytic Proton donor/acceptor. Lys170 acts as the Schiff-base intermediate with substrate in catalysis. Residues Arg213, Ser232, and Gln236 each coordinate 3-dehydroquinate.

This sequence belongs to the type-I 3-dehydroquinase family. In terms of assembly, homodimer.

The catalysed reaction is 3-dehydroquinate = 3-dehydroshikimate + H2O. The protein operates within metabolic intermediate biosynthesis; chorismate biosynthesis; chorismate from D-erythrose 4-phosphate and phosphoenolpyruvate: step 3/7. Its function is as follows. Involved in the third step of the chorismate pathway, which leads to the biosynthesis of aromatic amino acids. Catalyzes the cis-dehydration of 3-dehydroquinate (DHQ) and introduces the first double bond of the aromatic ring to yield 3-dehydroshikimate. The chain is 3-dehydroquinate dehydratase from Syntrophotalea carbinolica (strain DSM 2380 / NBRC 103641 / GraBd1) (Pelobacter carbinolicus).